A 249-amino-acid chain; its full sequence is Probable septum site-determining protein MinC (249 aa).

The interval 117 to 138 is disordered; the sequence is AVRPPQPPPPPHARAEPAAPVA.

It belongs to the MinC family. In terms of assembly, interacts with MinD and FtsZ.

Its function is as follows. Cell division inhibitor that blocks the formation of polar Z ring septums. Rapidly oscillates between the poles of the cell to destabilize FtsZ filaments that have formed before they mature into polar Z rings. Prevents FtsZ polymerization. In Xanthomonas campestris pv. campestris (strain 8004), this protein is Probable septum site-determining protein MinC.